The primary structure comprises 356 residues: Red-sensitive opsin-2 (356 aa).

The Extracellular segment spans residues 1–48 (MAEWANAAFAARRRGDETTRDNAFSYTNSNNTRDPFEGPNYHIAPRWV). Asn-30 carries an N-linked (GlcNAc...) asparagine glycan. The chain crosses the membrane as a helical span at residues 49 to 73 (YNVATVWMFFVVVASTFTNGLVLVA). Over 74–85 (TAKFKKLRHPLN) the chain is Cytoplasmic. Residues 86–111 (WILVNLAIADLGETLFASTISVINQV) form a helical membrane-spanning segment. Residues 112–125 (FGYFILGHPMCIFE) lie on the Extracellular side of the membrane. Cys-122 and Cys-199 are joined by a disulfide. A helical membrane pass occupies residues 126–145 (GYTVSVCGIAGLWSLTVISW). Over 146–164 (ERWVVVCKPFGNVKFDGKW) the chain is Cytoplasmic. The helical transmembrane segment at 165 to 188 (ASAGIIFSWVWAAVWCAPPIFGWS) threads the bilayer. Residues 189–214 (RYWPHGLKTSCGPDVFGGNEDPGVQS) are Extracellular-facing. A helical membrane pass occupies residues 215–242 (YMLVLMITCCILPLAIIILCYIAVFLAI). The Cytoplasmic portion of the chain corresponds to 243–264 (HAVAQQQKDSESTQKAEKEVSR). Residues 265–288 (MVVVMILAFCLCWGPYTAFACFAA) traverse the membrane as a helical segment. Topologically, residues 289–296 (ANPGYAFH) are extracellular. The chain crosses the membrane as a helical span at residues 297 to 321 (PLAAAMPAYFAKSATIYNPIIYVFM). Lys-308 carries the post-translational modification N6-(retinylidene)lysine. At 322-356 (NRQFRVCIMQLFGKKVDDGSEVSTSKTEVSSVAPA) the chain is on the cytoplasmic side.

The protein belongs to the G-protein coupled receptor 1 family. Opsin subfamily. Phosphorylated on some or all of the serine and threonine residues present in the C-terminal region.

Its subcellular location is the membrane. Visual pigments are the light-absorbing molecules that mediate vision. They consist of an apoprotein, opsin, covalently linked to cis-retinal. The polypeptide is Red-sensitive opsin-2 (opn1lw2) (Danio rerio (Zebrafish)).